We begin with the raw amino-acid sequence, 66 residues long: DNA-directed RNA polymerase subunit Rpo10 (66 aa).

Residues Cys7, Cys10, Cys44, and Cys45 each contribute to the Zn(2+) site.

The protein belongs to the archaeal Rpo10/eukaryotic RPB10 RNA polymerase subunit family. As to quaternary structure, part of the RNA polymerase complex. Zn(2+) serves as cofactor.

It is found in the cytoplasm. It catalyses the reaction RNA(n) + a ribonucleoside 5'-triphosphate = RNA(n+1) + diphosphate. Functionally, DNA-dependent RNA polymerase (RNAP) catalyzes the transcription of DNA into RNA using the four ribonucleoside triphosphates as substrates. The chain is DNA-directed RNA polymerase subunit Rpo10 from Staphylothermus marinus (strain ATCC 43588 / DSM 3639 / JCM 9404 / F1).